The sequence spans 523 residues: Dynein regulatory complex subunit 3 (523 aa).

LRR repeat units lie at residues 44–65, 66–87, 88–109, 110–131, and 132–153; these read DVLS…WQFE, NLKK…TNLI, HLVW…DTLV, NLED…DALV, and KLQV…IYLR. The LRRCT domain maps to 166–204; it reads NPVSEAEEYKMFIYAYLSDLVYLDFRRVDEQMREMAKMK. Coiled-coil stretches lie at residues 204–242 and 333–393; these read KHQY…AFVE and LNLN…LVGL.

Belongs to the DRC3 family. As to quaternary structure, component of the nexin-dynein regulatory complex (N-DRC). Interacts with DRC1. Interacts with TCTE1/DRC5. Interacts with DRC7.

The protein resides in the cytoplasm. Its subcellular location is the cytoskeleton. The protein localises to the cilium axoneme. It localises to the cell projection. It is found in the cilium. The protein resides in the flagellum axoneme. Its subcellular location is the flagellum. Functionally, component of the nexin-dynein regulatory complex (N-DRC) a key regulator of ciliary/flagellar motility which maintains the alignment and integrity of the distal axoneme and regulates microtubule sliding in motile axonemes. The sequence is that of Dynein regulatory complex subunit 3 (Drc3) from Mus musculus (Mouse).